The sequence spans 247 residues: Uridylate kinase (247 aa).

16 to 19 (KLSG) contributes to the ATP binding site. Gly-58 serves as a coordination point for UMP. ATP-binding residues include Gly-59 and Arg-63. Residues Asp-78 and 139–146 (TGNPFFTT) contribute to the UMP site. ATP is bound by residues Thr-166, Tyr-172, and Asp-175.

The protein belongs to the UMP kinase family. As to quaternary structure, homohexamer.

The protein localises to the cytoplasm. The catalysed reaction is UMP + ATP = UDP + ADP. Its pathway is pyrimidine metabolism; CTP biosynthesis via de novo pathway; UDP from UMP (UMPK route): step 1/1. With respect to regulation, inhibited by UTP. Catalyzes the reversible phosphorylation of UMP to UDP. This Xylella fastidiosa (strain 9a5c) protein is Uridylate kinase.